The primary structure comprises 171 residues: Cadmium-induced protein AS8 (171 aa).

This chain is Cadmium-induced protein AS8, found in Arabidopsis thaliana (Mouse-ear cress).